The sequence spans 117 residues: Urease subunit beta (117 aa).

The disordered stretch occupies residues 95-117 (NAVNGKLDGGPHPGVPATERGAK).

Belongs to the urease beta subunit family. As to quaternary structure, heterotrimer of UreA (gamma), UreB (beta) and UreC (alpha) subunits. Three heterotrimers associate to form the active enzyme.

The protein resides in the cytoplasm. It carries out the reaction urea + 2 H2O + H(+) = hydrogencarbonate + 2 NH4(+). It functions in the pathway nitrogen metabolism; urea degradation; CO(2) and NH(3) from urea (urease route): step 1/1. This chain is Urease subunit beta, found in Pseudarthrobacter chlorophenolicus (strain ATCC 700700 / DSM 12829 / CIP 107037 / JCM 12360 / KCTC 9906 / NCIMB 13794 / A6) (Arthrobacter chlorophenolicus).